Here is a 343-residue protein sequence, read N- to C-terminus: Holliday junction branch migration complex subunit RuvB (343 aa).

Residues Thr-4–Tyr-193 are large ATPase domain (RuvB-L). Residues Leu-32, Arg-33, Gly-74, Lys-77, Thr-78, Thr-79, Glu-140 to Tyr-142, Arg-183, Tyr-193, and Arg-230 contribute to the ATP site. Thr-78 lines the Mg(2+) pocket. The small ATPAse domain (RuvB-S) stretch occupies residues Glu-194–Asp-264. Residues Val-267–Lys-343 form a head domain (RuvB-H) region. DNA is bound by residues Arg-322 and Arg-327.

This sequence belongs to the RuvB family. Homohexamer. Forms an RuvA(8)-RuvB(12)-Holliday junction (HJ) complex. HJ DNA is sandwiched between 2 RuvA tetramers; dsDNA enters through RuvA and exits via RuvB. An RuvB hexamer assembles on each DNA strand where it exits the tetramer. Each RuvB hexamer is contacted by two RuvA subunits (via domain III) on 2 adjacent RuvB subunits; this complex drives branch migration. In the full resolvosome a probable DNA-RuvA(4)-RuvB(12)-RuvC(2) complex forms which resolves the HJ.

It is found in the cytoplasm. The enzyme catalyses ATP + H2O = ADP + phosphate + H(+). Functionally, the RuvA-RuvB-RuvC complex processes Holliday junction (HJ) DNA during genetic recombination and DNA repair, while the RuvA-RuvB complex plays an important role in the rescue of blocked DNA replication forks via replication fork reversal (RFR). RuvA specifically binds to HJ cruciform DNA, conferring on it an open structure. The RuvB hexamer acts as an ATP-dependent pump, pulling dsDNA into and through the RuvAB complex. RuvB forms 2 homohexamers on either side of HJ DNA bound by 1 or 2 RuvA tetramers; 4 subunits per hexamer contact DNA at a time. Coordinated motions by a converter formed by DNA-disengaged RuvB subunits stimulates ATP hydrolysis and nucleotide exchange. Immobilization of the converter enables RuvB to convert the ATP-contained energy into a lever motion, pulling 2 nucleotides of DNA out of the RuvA tetramer per ATP hydrolyzed, thus driving DNA branch migration. The RuvB motors rotate together with the DNA substrate, which together with the progressing nucleotide cycle form the mechanistic basis for DNA recombination by continuous HJ branch migration. Branch migration allows RuvC to scan DNA until it finds its consensus sequence, where it cleaves and resolves cruciform DNA. The protein is Holliday junction branch migration complex subunit RuvB of Neisseria meningitidis serogroup A / serotype 4A (strain DSM 15465 / Z2491).